The following is a 276-amino-acid chain: Large ribosomal subunit protein uL2 (276 aa).

The segment at 224–276 (VMNPVDHPHGGGEGKAPIGRKSPMTPWGKPTLGYKTRKKKNKSDKFIIRRRKK) is disordered. The segment covering 258–276 (KTRKKKNKSDKFIIRRRKK) has biased composition (basic residues).

The protein belongs to the universal ribosomal protein uL2 family. Part of the 50S ribosomal subunit. Forms a bridge to the 30S subunit in the 70S ribosome.

One of the primary rRNA binding proteins. Required for association of the 30S and 50S subunits to form the 70S ribosome, for tRNA binding and peptide bond formation. It has been suggested to have peptidyltransferase activity; this is somewhat controversial. Makes several contacts with the 16S rRNA in the 70S ribosome. The protein is Large ribosomal subunit protein uL2 of Geobacillus stearothermophilus (Bacillus stearothermophilus).